We begin with the raw amino-acid sequence, 309 residues long: Porphobilinogen deaminase (309 aa).

C241 carries the S-(dipyrrolylmethanemethyl)cysteine modification.

This sequence belongs to the HMBS family. As to quaternary structure, monomer. Requires dipyrromethane as cofactor.

It carries out the reaction 4 porphobilinogen + H2O = hydroxymethylbilane + 4 NH4(+). Its pathway is porphyrin-containing compound metabolism; protoporphyrin-IX biosynthesis; coproporphyrinogen-III from 5-aminolevulinate: step 2/4. Tetrapolymerization of the monopyrrole PBG into the hydroxymethylbilane pre-uroporphyrinogen in several discrete steps. This chain is Porphobilinogen deaminase, found in Bacillus thuringiensis (strain Al Hakam).